We begin with the raw amino-acid sequence, 111 residues long: uncharacterized protein (111 aa).

Residues 20–39 traverse the membrane as a helical segment; that stretch reads PVDTTGLIFFAVFASSFVLY.

The protein localises to the membrane. This is an uncharacterized protein from Saccharomyces cerevisiae (strain ATCC 204508 / S288c) (Baker's yeast).